An 84-amino-acid chain; its full sequence is Large ribosomal subunit protein bL31B (84 aa).

It belongs to the bacterial ribosomal protein bL31 family. Type B subfamily. As to quaternary structure, part of the 50S ribosomal subunit.

This chain is Large ribosomal subunit protein bL31B, found in Photorhabdus laumondii subsp. laumondii (strain DSM 15139 / CIP 105565 / TT01) (Photorhabdus luminescens subsp. laumondii).